A 668-amino-acid polypeptide reads, in one-letter code: MAAVGPPQQQVRMAQQQVWAALEVALRVPCLYIIDAIFNSYYDSSQSRFCIGLQIFLRLLGIVVSSIVLILSQRSLFKFYMYSSAFLLAATSVLVNYYAALHIDFYGAYNTSAFGIELLPRKGPSLWMALIVLQLTFGIGYVTLLQIQSIYSQLMILNILVPIIGLITELPLHIRETVVLMSSLILIFNTVLVLAVKLKWFYYSTRYVYLLVRHMYRIYGLQLLMEDTWKRIRFPDILRVFWLTRITTQATVLMYILRMANETESFFISWDDFWDVICNLIISGCDSTLTVLGMSAVISSIAHYLGLGILAFIGSTEEDDRRLGFVAPVLFFILALQTGLSGLRPEERLIRLSRNMCLLLTAVLHFIHGMTDPVLMSLSASHVSSFHRHFPVLFVSACLFILPVLLSYVLWHHYALNTWLFAVTAFCVELCLKVIVSLTVYTLFMIDGYYNVLWEKLDDYVYFVRSTGNIIEFIFGVVMFGNGAYTMMFESGSKIRACMMCLHAYFNIYLQVKNGWKTFMNRRTAVKKINSLPEIKGSHLQEIDDVCAICYHEFTTSARITPCNHYFHALCLRKWLYIQDTCPMCHQKVYIEDEIKDNSNASNNNGFIAPNENPNPEEALREDAAGSDRELNEDDSTDCDDDAQRERNGGIQHTGAAAAAAEFNDDTD.

At Ala-2 the chain carries N-acetylalanine. 11 helical membrane-spanning segments follow: residues 51–71 (IGLQIFLRLLGIVVSSIVLIL), 85–105 (AFLLAATSVLVNYYAALHIDF), 125–145 (SLWMALIVLQLTFGIGYVTLL), 154–174 (LMILNILVPIIGLITELPLHI), 178–198 (VVLMSSLILIFNTVLVLAVKL), 293–313 (GMSAVISSIAHYLGLGILAFI), 323–343 (LGFVAPVLFFILALQTGLSGL), 356–376 (MCLLLTAVLHFIHGMTDPVLM), 390–410 (FPVLFVSACLFILPVLLSYVL), 420–440 (LFAVTAFCVELCLKVIVSLTV), and 470–490 (IIEFIFGVVMFGNGAYTMMFE). An RING-type; atypical zinc finger spans residues 547-586 (CAICYHEFTTSARITPCNHYFHALCLRKWLYIQDTCPMCH). The tract at residues 602–668 (SNNNGFIAPN…AAAEFNDDTD (67 aa)) is disordered. A compositionally biased stretch (basic and acidic residues) spans 618–630 (EALREDAAGSDRE). Residues 631-641 (LNEDDSTDCDD) are compositionally biased toward acidic residues. Ser-636 bears the Phosphoserine mark. Residues Thr-637 and Thr-667 each carry the phosphothreonine modification.

Interacts with VHL. Interacts with MHC class I and HM13. Component of SCAP-SREBP complex composed of SREBF2, SCAP and RNF139; the complex hampers the interaction between SCAP and SEC24B, thereby reducing SREBF2 proteolytic processing. Interacts with SREBF2 (via C-terminal domain). Interacts with SCAP; the interaction inhibits the interaction of SCAP with SEC24B and hampering the ER to Golgi transport of the SCAP-SREBP complex. Interacts with SEC24B. Interacts with INSIG1 and INSIG2. Interacts with EIF3F and EIF3H; the interaction leads to protein translation inhibitions in a ubiquitination-dependent manner. Interacts with XBP1 isoform 1; the interaction induces ubiquitination and degradation of XBP1 isoform 1. Interacts with AUP1, AMFR and UBE2G2; interaction with AUP1 facilitates interaction of RNF139 with ubiquitin-conjugating enzyme UBE2G2 and ubiquitin ligase AMFR/gp78, leading to sterol-induced ubiquitination of HMGCR and its subsequent proteasomal degradation. In terms of processing, autoubiquitinated. Ubiquitination is induced by sterol and leads to ist degradation via the ubiquitin-proteasome pathway.

It is found in the endoplasmic reticulum membrane. The catalysed reaction is S-ubiquitinyl-[E2 ubiquitin-conjugating enzyme]-L-cysteine + [acceptor protein]-L-lysine = [E2 ubiquitin-conjugating enzyme]-L-cysteine + N(6)-ubiquitinyl-[acceptor protein]-L-lysine.. It functions in the pathway protein modification; protein ubiquitination. In terms of biological role, E3-ubiquitin ligase; acts as a negative regulator of cell proliferation through mechanisms involving G2/M arrest and cell death. Required for MHC class I ubiquitination in cells expressing the cytomegalovirus protein US2 before dislocation from the endoplasmic reticulum (ER). Affects SREBP processing by hindering the SREBP-SCAP complex translocation from the ER to the Golgi, thereby reducing SREBF2 target gene expression. Involved in the sterol-accelerated degradation of HMGCR. This is achieved through binding to INSIG1 and/or INSIG2 at the ER membrane. In addition, interaction of RNF139 with AUP1 facilitates interaction of RNF139 with ubiquitin-conjugating enzyme UBE2G2 and ubiquitin ligase AMFR, leading to ubiquitination of HMGCR. The ubiquitinated HMGCR is then released from the ER by the complex into the cytosol for subsequent destruction. Required for INSIG1 ubiquitination. May be required for EIF3 complex ubiquitination. The sequence is that of E3 ubiquitin-protein ligase RNF139 from Mus musculus (Mouse).